We begin with the raw amino-acid sequence, 351 residues long: Phenylalanine--tRNA ligase alpha subunit (351 aa).

Mg(2+) is bound at residue Glu266.

This sequence belongs to the class-II aminoacyl-tRNA synthetase family. Phe-tRNA synthetase alpha subunit type 1 subfamily. In terms of assembly, tetramer of two alpha and two beta subunits. It depends on Mg(2+) as a cofactor.

It localises to the cytoplasm. The enzyme catalyses tRNA(Phe) + L-phenylalanine + ATP = L-phenylalanyl-tRNA(Phe) + AMP + diphosphate + H(+). This chain is Phenylalanine--tRNA ligase alpha subunit, found in Anaplasma marginale (strain St. Maries).